Here is a 292-residue protein sequence, read N- to C-terminus: F-box/LRR-repeat protein 15 (292 aa).

Residues Leu-12 to Asp-59 enclose the F-box domain. LRR repeat units follow at residues His-134–Ala-155, Gly-160–Ser-181, Lys-186–Ala-207, Glu-212–Ala-233, and Lys-238–Arg-259.

Belongs to the FBXL15 family. Part of the SCF (SKP1-CUL1-F-box) E3 ubiquitin-protein ligase complex SCF(FBXL15).

The protein resides in the cytoplasm. The protein operates within protein modification; protein ubiquitination. Substrate recognition component of a SCF (SKP1-CUL1-F-box protein) E3 ubiquitin-protein ligase complex which mediates the ubiquitination and subsequent proteasomal degradation of target proteins. Acts as a positive regulator of the BMP signaling pathway. Required for dorsal/ventral pattern formation. The polypeptide is F-box/LRR-repeat protein 15 (fbxl15) (Salmo salar (Atlantic salmon)).